A 224-amino-acid polypeptide reads, in one-letter code: uncharacterized protein (224 aa).

The 68-residue stretch at 10–77 folds into the HTH gntR-type domain; sequence TPYYLQFYNQ…DRNGFSITSL (68 aa). The segment at residues 37 to 56 is a DNA-binding region (H-T-H motif); sequence ETQLAKSFGVSRSPIREAMR.

This is an uncharacterized protein from Bacillus subtilis (strain 168).